A 513-amino-acid polypeptide reads, in one-letter code: GMP synthase [glutamine-hydrolyzing] (513 aa).

Residues 7–197 (TILVLDFGGQ…LFGVCGCTGE (191 aa)) form the Glutamine amidotransferase type-1 domain. Cys84 serves as the catalytic Nucleophile. Catalysis depends on residues His171 and Glu173. Residues 198–387 (WTMENFIEEQ…LGLPEDIVWR (190 aa)) enclose the GMPS ATP-PPase domain. An ATP-binding site is contributed by 225–231 (SGGVDSS).

Homodimer.

It catalyses the reaction XMP + L-glutamine + ATP + H2O = GMP + L-glutamate + AMP + diphosphate + 2 H(+). Its pathway is purine metabolism; GMP biosynthesis; GMP from XMP (L-Gln route): step 1/1. Catalyzes the synthesis of GMP from XMP. The polypeptide is GMP synthase [glutamine-hydrolyzing] (Heliobacterium modesticaldum (strain ATCC 51547 / Ice1)).